The sequence spans 201 residues: Small ribosomal subunit protein uS4 (201 aa).

A disordered region spans residues 26–46 (LARRAYAPGDHGRDRRGKLSE). Over residues 35 to 44 (DHGRDRRGKL) the composition is skewed to basic and acidic residues. The 64-residue stretch at 93-156 (RRLDNMVYRL…KNLDIIKNAV (64 aa)) folds into the S4 RNA-binding domain.

The protein belongs to the universal ribosomal protein uS4 family. As to quaternary structure, part of the 30S ribosomal subunit. Contacts protein S5. The interaction surface between S4 and S5 is involved in control of translational fidelity.

Its function is as follows. One of the primary rRNA binding proteins, it binds directly to 16S rRNA where it nucleates assembly of the body of the 30S subunit. With S5 and S12 plays an important role in translational accuracy. In Limosilactobacillus reuteri (strain DSM 20016) (Lactobacillus reuteri), this protein is Small ribosomal subunit protein uS4.